A 417-amino-acid chain; its full sequence is Imidazolonepropionase (417 aa).

Fe(3+) is bound by residues histidine 77 and histidine 79. The Zn(2+) site is built by histidine 77 and histidine 79. 3 residues coordinate 4-imidazolone-5-propanoate: arginine 86, tyrosine 149, and histidine 182. Tyrosine 149 is an N-formimidoyl-L-glutamate binding site. Histidine 244 contributes to the Fe(3+) binding site. A Zn(2+)-binding site is contributed by histidine 244. Residue glutamate 247 coordinates 4-imidazolone-5-propanoate. Aspartate 323 contacts Fe(3+). Aspartate 323 contacts Zn(2+). Asparagine 325 serves as a coordination point for N-formimidoyl-L-glutamate.

The protein belongs to the metallo-dependent hydrolases superfamily. HutI family. The cofactor is Zn(2+). Requires Fe(3+) as cofactor.

It is found in the cytoplasm. The catalysed reaction is 4-imidazolone-5-propanoate + H2O = N-formimidoyl-L-glutamate. The protein operates within amino-acid degradation; L-histidine degradation into L-glutamate; N-formimidoyl-L-glutamate from L-histidine: step 3/3. Its function is as follows. Catalyzes the hydrolytic cleavage of the carbon-nitrogen bond in imidazolone-5-propanoate to yield N-formimidoyl-L-glutamate. It is the third step in the universal histidine degradation pathway. The protein is Imidazolonepropionase of Halobacterium salinarum (strain ATCC 29341 / DSM 671 / R1).